The following is a 209-amino-acid chain: High frequency lysogenization protein HflD homolog (209 aa).

Belongs to the HflD family.

Its subcellular location is the cytoplasm. The protein localises to the cell inner membrane. The sequence is that of High frequency lysogenization protein HflD homolog from Marinomonas sp. (strain MWYL1).